Consider the following 201-residue polypeptide: Phosphatidylglycerophosphatase and protein-tyrosine phosphatase 1 (201 aa).

The transit peptide at 1 to 27 (MAATALLEAGLARVLFYPTLLYTLFRG) directs the protein to the mitochondrion. In terms of domain architecture, Tyrosine-protein phosphatase spans 37–188 (WYHRIDPTVL…LKEFHKQITA (152 aa)). Catalysis depends on Cys132, which acts as the Phosphocysteine intermediate.

Belongs to the protein-tyrosine phosphatase family. Non-receptor class dual specificity subfamily. As to quaternary structure, interacts with STYXL1; the interaction inhibits PTPMT1 catalytic activity.

The protein resides in the mitochondrion inner membrane. The catalysed reaction is a 1,2-diacyl-sn-glycero-3-phospho-(1'-sn-glycero-3'-phosphate) + H2O = a 1,2-diacyl-sn-glycero-3-phospho-(1'-sn-glycerol) + phosphate. It carries out the reaction O-phospho-L-tyrosyl-[protein] + H2O = L-tyrosyl-[protein] + phosphate. It catalyses the reaction O-phospho-L-seryl-[protein] + H2O = L-seryl-[protein] + phosphate. The enzyme catalyses O-phospho-L-threonyl-[protein] + H2O = L-threonyl-[protein] + phosphate. The catalysed reaction is 1,2-di-(9Z-octadecenoyl)-sn-glycero-3-phospho-(1'-sn-glycerol-3'-phosphate) + H2O = 1,2-di-(9Z-octadecenoyl)-sn-glycero-3-phospho-(1'-sn-glycerol) + phosphate. It carries out the reaction 1,2-dioctanoyl-sn-glycero-3-phospho-(1D-myo-inositol-5-phosphate) + H2O = 1,2-dioctanoyl-sn-glycero-3-phospho-(1D-myo-inositol) + phosphate. It catalyses the reaction a 1-acyl-2-hexanoyl-sn-glycero-3-phospho-(1D-myo-inositol-5-phosphate) + H2O = a 1-acyl-2-hexanoyl-sn-glycero-3-phospho-(1D-myo-inositol) + phosphate. The enzyme catalyses 1,2-dibutyryl-sn-glycero-3-phospho-(1D-myo-inositol-5-phosphate) + H2O = 1,2-dibutyryl-sn-glycero-3-phospho-(1D-myo-inositol) + phosphate. Its pathway is phospholipid metabolism; phosphatidylglycerol biosynthesis; phosphatidylglycerol from CDP-diacylglycerol: step 2/2. In terms of biological role, lipid phosphatase which dephosphorylates phosphatidylglycerophosphate (PGP) to phosphatidylglycerol (PG). PGP is an essential intermediate in the biosynthetic pathway of cardiolipin, a mitochondrial-specific phospholipid regulating the membrane integrity and activities of the organelle. Has also been shown to display phosphatase activity toward phosphoprotein substrates, specifically mediates dephosphorylation of mitochondrial proteins, thereby playing an essential role in ATP production. Has probably a preference for proteins phosphorylated on Ser and/or Thr residues compared to proteins phosphorylated on Tyr residues. Probably involved in regulation of insulin secretion in pancreatic beta cells. May prevent intrinsic apoptosis, probably by regulating mitochondrial membrane integrity. This chain is Phosphatidylglycerophosphatase and protein-tyrosine phosphatase 1, found in Homo sapiens (Human).